Reading from the N-terminus, the 494-residue chain is Cysteine--tRNA ligase (494 aa).

Cysteine 29 contacts Zn(2+). A 'HIGH' region motif is present at residues 31–41; the sequence is VTVYDYCHLGH. Cysteine 216, histidine 241, and glutamate 245 together coordinate Zn(2+). Positions 273–277 match the 'KMSKS' region motif; sequence KMSKS. Lysine 276 is a binding site for ATP.

Belongs to the class-I aminoacyl-tRNA synthetase family. As to quaternary structure, monomer. The cofactor is Zn(2+).

The protein localises to the cytoplasm. The catalysed reaction is tRNA(Cys) + L-cysteine + ATP = L-cysteinyl-tRNA(Cys) + AMP + diphosphate. The polypeptide is Cysteine--tRNA ligase (Cyanothece sp. (strain PCC 7425 / ATCC 29141)).